Consider the following 374-residue polypeptide: MGELGALQSIVYHRGSLRLLDQRKLPLEVDYIDVKCSGDGWNAIRDMVVRGAPAIAIAAALALAVEVSGLEDFTGTPAEAAVFVSEKLEYLVSSRPTAVNLSDAATKLRSLVSRTAETEKDAKAIFQAYIDAAETMLVDDVSDNKAIGSHGAEFLKQKLEVSKDISVLTHCNTGSLATAGYGTALGVIRALHSGGILEKAFCTETRPFNQGSRLTAFELVHDKVPATLIADSAAAALMKSGCIQAVIVGADRIAANGDTANKIGTYNLAISAKHHGVQFYVAAPITSIDLSLPSGEQIVIEERSPNELLNSEGGLGKQVAASGISVWNPAFDVTPANLITAIITEKGVITKSDADETFNIKDFIQSAKLYSTMQ.

The Proton donor role is filled by D251.

This sequence belongs to the eIF-2B alpha/beta/delta subunits family. MtnA subfamily.

Its subcellular location is the cytoplasm. It localises to the nucleus. It carries out the reaction 5-(methylsulfanyl)-alpha-D-ribose 1-phosphate = 5-(methylsulfanyl)-D-ribulose 1-phosphate. The protein operates within amino-acid biosynthesis; L-methionine biosynthesis via salvage pathway; L-methionine from S-methyl-5-thio-alpha-D-ribose 1-phosphate: step 1/6. Its function is as follows. Catalyzes the interconversion of methylthioribose-1-phosphate (MTR-1-P) into methylthioribulose-1-phosphate (MTRu-1-P). The sequence is that of Methylthioribose-1-phosphate isomerase (IDI2) from Oryza sativa subsp. japonica (Rice).